A 113-amino-acid polypeptide reads, in one-letter code: Propane 2-monooxygenase, effector component (113 aa).

This sequence belongs to the TmoD/XamoD family. As to quaternary structure, the propane 2-monooxygenase multicomponent enzyme system is composed of an electron transfer component and a monooxygenase component interacting with the effector protein PrmD. The electron transfer component is composed of a reductase (PrmB), and the monooxygenase component is formed by a large subunit (PrmA) and a small subunit (PrmC).

Functionally, effector component of the propane 2-monooxygenase multicomponent enzyme system which is involved in the degradation of propane via the O2-dependent hydroxylation of propane. The protein is Propane 2-monooxygenase, effector component of Rhodococcus jostii (strain RHA1).